Consider the following 106-residue polypeptide: Urease subunit beta (106 aa).

Belongs to the urease beta subunit family. Heterotrimer of UreA (gamma), UreB (beta) and UreC (alpha) subunits. Three heterotrimers associate to form the active enzyme.

The protein localises to the cytoplasm. The enzyme catalyses urea + 2 H2O + H(+) = hydrogencarbonate + 2 NH4(+). It functions in the pathway nitrogen metabolism; urea degradation; CO(2) and NH(3) from urea (urease route): step 1/1. The protein is Urease subunit beta of Parasynechococcus marenigrum (strain WH8102).